The chain runs to 976 residues: 3-hydroxy-3-methylglutaryl-coenzyme A reductase (976 aa).

The Lumenal segment spans residues 1 to 36 (MDHEGCQGQHPQQCCQWVSNAWSEFLDLLKNAETLD). Residues 36 to 217 (DIVIMLLGYI…FTFYTAILSI (182 aa)) enclose the SSD domain. The chain crosses the membrane as a helical span at residues 37–57 (IVIMLLGYIAMHLTFVSLFLS). Residues 58 to 64 (MRKMGSK) lie on the Cytoplasmic side of the membrane. Residues 65–85 (FWLGICTLFSSVFAFLFGLVV) form a helical membrane-spanning segment. Residues 86-90 (TTKLG) lie on the Lumenal side of the membrane. The chain crosses the membrane as a helical span at residues 91 to 111 (VPISVILLSEGLPFLVVTIGF). Residues 112-169 (EKNIVLTRAVMSHAIEHRRIQAQNSKSGKRSPDGSTQNMIQYAVQAAIKEKGFEIIRD) lie on the Cytoplasmic side of the membrane. Residues 170-190 (YAIEIVILVIGAASGVQGGLQ) form a helical membrane-spanning segment. Residues 191–193 (QFC) are Lumenal-facing. Residues 194-214 (FLAAWTLFFDFILLFTFYTAI) traverse the membrane as a helical segment. Residues 215–272 (LSIKLRSTVSSVMSICVWPLRMMASRRVAENVAKGDDELNRVRGDAPLFGRKSSSIPK) are Cytoplasmic-facing. The chain crosses the membrane as a helical span at residues 273–293 (FKVLMILGFIFVNIVNICSIP). Residues 294–401 (FRNPSSMSTI…GGILKSLEDP (108 aa)) lie on the Lumenal side of the membrane. The helical transmembrane segment at 402–422 (VLSKWIVIALALSVALNGYLF) threads the bilayer. Residues 423–976 (NVARWGIKDP…RYSEVKAIDE (554 aa)) lie on the Cytoplasmic side of the membrane. The active-site Charge relay system is the Glu-618. 624–630 (SASRGCK) contacts CoA. NADP(+) is bound by residues 685–687 (SRF) and 712–720 (DAMGMNMIS). The active-site Charge relay system is Lys-752. 781–783 (VLK) provides a ligand contact to CoA. Residue Asp-828 is the Charge relay system of the active site. Residue 923-924 (AH) participates in CoA binding. The Proton donor role is filled by His-924. A disordered region spans residues 926 to 954 (QHNRSAAPSRSTTPGSSHDARLTGHDQCP). Residue 928–929 (NR) coordinates NADP(+). Polar residues predominate over residues 928 to 941 (NRSAAPSRSTTPGS). The span at 943-953 (HDARLTGHDQC) shows a compositional bias: basic and acidic residues.

This sequence belongs to the HMG-CoA reductase family.

It is found in the endoplasmic reticulum membrane. It carries out the reaction (R)-mevalonate + 2 NADP(+) + CoA = (3S)-3-hydroxy-3-methylglutaryl-CoA + 2 NADPH + 2 H(+). It functions in the pathway metabolic intermediate biosynthesis; (R)-mevalonate biosynthesis; (R)-mevalonate from acetyl-CoA: step 3/3. In terms of biological role, HMG-CoA reductase; part of the first module of ergosterol biosynthesis pathway that includes the early steps of the pathway, conserved across all eukaryotes, and which results in the formation of mevalonate from acetyl-coenzyme A (acetyl-CoA). In this module, the cytosolic acetyl-CoA acetyltransferase catalyzes the formation of acetoacetyl-CoA. The hydroxymethylglutaryl-CoA synthase then condenses acetyl-CoA with acetoacetyl-CoA to form HMG-CoA. The rate-limiting step of the early module is the reduction to mevalonate by the 3-hydroxy-3-methylglutaryl-coenzyme A (HMG-CoA) reductase HMGR. The chain is 3-hydroxy-3-methylglutaryl-coenzyme A reductase from Fusarium fujikuroi (Bakanae and foot rot disease fungus).